Here is a 69-residue protein sequence, read N- to C-terminus: Large ribosomal subunit protein uL29 (69 aa).

This sequence belongs to the universal ribosomal protein uL29 family.

This chain is Large ribosomal subunit protein uL29, found in Staphylococcus aureus (strain Mu3 / ATCC 700698).